The chain runs to 2376 residues: MESPGRKVLYEIRHHASLPYVPRYPPLPQADGTNSKGGLRSLVSIKGVSQLKEKWSEYWNPKKTNKPVSLFISPRGELVAVTSGNHVTILRKDDDYRKPCGNFTSSISGSFTSGVWSEKHDVLGLVDDSETLFFIRANGEEISQVTKRNLKVSAPVLGLMEDDSDLQPSCLCSFSILTSDGRIHHVEISREPSASAFSKHASNSVSKQFPNHVFCFDYHPDLSFLLIVGSVAGISSSGSSGSSCISLWRKCQNLGLELLSTTKFDGVYCENKDDQLAYPKTLISPQGSHVASLDSNGCVHIFQLDKARLTLSCCPSEDSSDSLKPDKSLQSWKESLRNVVDFTWWSDHALAILKRSGNISIFDISRCVIVQEDATIYSMPVVERVQKYEGHIFLLESSTQEAKSALANVDRDASEFHHTSEHSMLWRLISFTEKTIPEMYKILVEKCQYQEALDFSDSHGLDRDEVFKSRWLKSEKGVSDVSTILSKIKDKAFVLSECLDRIGPTEDSMKALLAHGLYLTNHYVFAKSEDQESQQLWEFRLARLRLLQFSERLDTYLGISMGRYSVQDYRKFRSNPINQAAISLAESGRIGALNLLFKRHPYSLVSFMLQILAAIPETVPVETYAHLLPGKSPPTSMAVREEDWVECEKMVKFINNLPENGKNDSLIQTEPIVRRCLGYNWPSSEELAAWYKSRARDIDSTTGLLDNCICLIDIACRKGISELEQFHEDLSYLHQIIYSDEIGGEICFSLSLAGWEHLSDYEKFKIMLEGVKADTVVRRLHEKAIPFMQKRFLGTNNQNVESFLVKWLKEMAAKSDMDLCSKVIDEGCIDLYTVCFFKDDVEAVDCALQCLYLCKVTDKWNVMATMLSKLPKINDKAGEDIQRRLKRAEGHIEAGRLLEFYQVPKPINYFLEVHLDEKGVKQILRLMLSKFVRRQPGRSDNDWACMWRDLRQLQEKAFYFLDLEFVLTEFCRGLLKAGKFSLARNYLKGTGSVALPSEKAESLVINAAKEYFFSAPSLASEEIWKARECLNIFSSSRTVKAEDDIIDAVTVRLPKLGVSLLPVQFKQVKDPMEIIKMAITGDPEAYLHGEELIEVAKLLGLNSSEDISSVKEAIAREAAIAGDMQLAFDLCLVLTKEGHGPIWDLGAAIARSPALEHMDISSRKQLLGFALGHCDDESISELLHAWKDFDLQGQCETLGMLSESNSPEFQKMDGVSCLTDFPQMLDGLSSDQQLDLDRAKDSISCVAKDMPVDDSVDLESLLKENGKLFSFAASHLPWLLKLGRNRKLDKSLVLDSIPGKQFVSIKATALITILSWLAKNGFAPKDELIAMITDSIIEHPVTKEEDVIGCSFLLNLVDASNAVEVIEKQLRIRGNYQEIRSIMSLGMIYSLLHDSGVECTAPIQRRELLQKNFERKQTESLADDMSKIDKLQSTFWKEWKHKLEEKMHDADRSRMLERIIPGVETERFLSHDIEYIKVAVFSLIESVKSEKKLILKDVLKLADTYGLKQSEVILRYLSSILCSEIWTNEDITAEILQVKEEILTFASDTIETISTIVYPAASGLNKQRLAYIYSLLSECYCHLAESKEASLLVQPNSSFAGLSNWYNVLKQECSRVSFIKDLDFKNISELGGLNFDSFNNEVHAHINEMNLEALAKMVETLSGLSMENSSKGLISCQDVYKQYIMNLLDTLESRRDLDFGSAESFQGFLGQLEKTYDHCRVYVRILEPLQAVEILKRHFTLVLPPNGSYMHIPDSSTWQECLILLINFWIRLADEMQEVKSSNPSLVENLTLSPECISSCFTLLIKLVMYDSLSPSQAWAAILVYLRSGLVGDCATEIFNFCRAMVFSGCGFGPISDVFSDMSSRYPTALQDLPHLYLSVLEPILQDLVSGAPETQNLYRLLSSLSNLEGNLEELKRVRLVVWKQLVIFSENLELPSQVRVYSLELMQFISGKNIKGSSSELQSNVMPWDGSAELLSSMQKTEAALNQALPDQADGSSRLTNTLVALKSSQVAVAAISPGLEISPEDLSTVETSVSCFSKLSAAVTTASQAEALLAILEGWEELFEAKNAELLPSNEATDQGNDWGDDDWNDGWETLQESEPVEKVKKECVVSAHPLHSCWLDIFRKYIALSMPENVLQLIDGSLQKPEEVIIEETEAESLTGILARTDPFLALKISLLLPYKQIRSQCLSVVEEQLKQEGIPELSSQSHHEVLLLVIYSGTLSTIISNACYGSVFSFLCYLIGKLSREFQEERITQADNRESNASSESRFISCFGQLMFPCFVSGLVKADQQILAGFLVTKFMHSNPSLSLINVAEASLRRYLDKQLESLEHLEDSFAESSDFETLKNTVSSLRGTSKEVIRSALASLSNCTNSR.

Forms a complex with MAG2, ZW10/MIP1 and MIP3 on the endoplasmic reticulum.

The protein resides in the endoplasmic reticulum membrane. Its function is as follows. Required for proper maturation of seed storage proteins. Forms a complex with MAG2, ZW10/MIP1 and MIP3 on the endoplasmic reticulum that may be responsible for efficient transport of seed storage proteins. The chain is MAG2-interacting protein 2 from Arabidopsis thaliana (Mouse-ear cress).